We begin with the raw amino-acid sequence, 423 residues long: UDP-N-acetylglucosamine 1-carboxyvinyltransferase (423 aa).

22-23 (KN) lines the phosphoenolpyruvate pocket. UDP-N-acetyl-alpha-D-glucosamine is bound at residue Arg98. Cys122 acts as the Proton donor in catalysis. Residue Cys122 is modified to 2-(S-cysteinyl)pyruvic acid O-phosphothioketal. Residues 127–131 (RPVDQ), Asp311, and Ile333 contribute to the UDP-N-acetyl-alpha-D-glucosamine site.

The protein belongs to the EPSP synthase family. MurA subfamily.

It is found in the cytoplasm. It catalyses the reaction phosphoenolpyruvate + UDP-N-acetyl-alpha-D-glucosamine = UDP-N-acetyl-3-O-(1-carboxyvinyl)-alpha-D-glucosamine + phosphate. It functions in the pathway cell wall biogenesis; peptidoglycan biosynthesis. Functionally, cell wall formation. Adds enolpyruvyl to UDP-N-acetylglucosamine. This chain is UDP-N-acetylglucosamine 1-carboxyvinyltransferase, found in Stenotrophomonas maltophilia (strain R551-3).